We begin with the raw amino-acid sequence, 110 residues long: Large ribosomal subunit protein uL22 (110 aa).

Belongs to the universal ribosomal protein uL22 family. As to quaternary structure, part of the 50S ribosomal subunit.

Its function is as follows. This protein binds specifically to 23S rRNA; its binding is stimulated by other ribosomal proteins, e.g. L4, L17, and L20. It is important during the early stages of 50S assembly. It makes multiple contacts with different domains of the 23S rRNA in the assembled 50S subunit and ribosome. The globular domain of the protein is located near the polypeptide exit tunnel on the outside of the subunit, while an extended beta-hairpin is found that lines the wall of the exit tunnel in the center of the 70S ribosome. The sequence is that of Large ribosomal subunit protein uL22 from Histophilus somni (strain 2336) (Haemophilus somnus).